Here is a 358-residue protein sequence, read N- to C-terminus: Histamine H2 receptor (358 aa).

Residues 1-22 (MEPNGTVHSCCLDSMALKVTIS) lie on the Extracellular side of the membrane. Asn4 is a glycosylation site (N-linked (GlcNAc...) asparagine). The helical transmembrane segment at 23–44 (VVLTTLILITIAGNVVVCLAVS) threads the bilayer. The Cytoplasmic portion of the chain corresponds to 45–57 (LNRRLRSLTNCFI). Residues 58–81 (VSLAATDLLLGLLVLPFSAIYQLS) traverse the membrane as a helical segment. The Extracellular portion of the chain corresponds to 82-92 (FTWSFGHVFCN). A disulfide bridge connects residues Cys91 and Cys173. The chain crosses the membrane as a helical span at residues 93–114 (IYTSLDVMLCTASILNLFMISL). The Cytoplasmic segment spans residues 115–134 (DRYCAVTDPLRYPVLVTPVR). The helical transmembrane segment at 135–159 (VAISLVFIWVISITLSFLSIHLGWN) threads the bilayer. Residues 160–179 (SRNGTRGGNDTFKCKVQVNE) lie on the Extracellular side of the membrane. The chain crosses the membrane as a helical span at residues 180-203 (VYGLVDGLVTFYLPLLIMCVTYYR). The Cytoplasmic portion of the chain corresponds to 204 to 233 (IFKIAREQAKRINHISSWKAATIREHKATV). A helical transmembrane segment spans residues 234–257 (TLAAVMGAFIICWFPYFTAFVYRG). The Extracellular segment spans residues 258-266 (LRGDDAINE). A helical transmembrane segment spans residues 267-288 (AVEGIVLWLGYANSALNPILYA). At 289-358 (ALNRDFRTAY…LTHPQGNPIR (70 aa)) the chain is on the cytoplasmic side. Cys304 carries S-palmitoyl cysteine lipidation.

Belongs to the G-protein coupled receptor 1 family.

The protein resides in the cell membrane. In terms of biological role, the H2 subclass of histamine receptors mediates gastric acid secretion. The activity of this receptor is mediated by G proteins which activate adenylyl cyclase. The protein is Histamine H2 receptor (Hrh2) of Rattus norvegicus (Rat).